A 163-amino-acid polypeptide reads, in one-letter code: Calcium-binding protein I (163 aa).

EF-hand domains are found at residues 20 to 42 (DKNK…NSKN), 82 to 117 (KPEI…LGCG), and 118 to 153 (NSKK…LKQD). Ca(2+)-binding residues include Asp-95, Asn-97, Asp-99, Met-101, Glu-106, Asp-131, Asn-133, Glu-135, Ser-137, and Asp-142.

This chain is Calcium-binding protein I (cbpI), found in Dictyostelium discoideum (Social amoeba).